The following is a 522-amino-acid chain: Exo-alpha-(1-&gt;6)-L-arabinofuranosidase (522 aa).

Alpha-L-arabinofuranose-binding residues include Glu-39, Asn-84, and Asn-185. Catalysis depends on Glu-186, which acts as the Proton donor/acceptor. Alpha-L-arabinofuranose-binding residues include Tyr-257, Glu-310, and Gln-370. Glu-310 (nucleophile) is an active-site residue.

It belongs to the glycosyl hydrolase 51 family. Homohexamer; trimer of dimers.

It carries out the reaction Hydrolysis of terminal non-reducing alpha-L-arabinofuranoside residues in alpha-L-arabinosides.. The enzyme catalyses (20S)-ginsenoside Rc + H2O = L-arabinofuranose + (20S)-ginsenoside Rd. With respect to regulation, completely inhibited by Cu(2+) and partially inhibited by Co(2+) and Ba(2+). Catalyzes the hydrolysis of p-nitrophenyl-alpha-L-arabinofuranoside (pNP-alphaL-Af) and the hydrolysis of the terminal alpha-L-arabinofuranoside at the C20 position of ginsenoside Rc to produce ginsenoside Rd. Cannot hydrolyze p-nitrophenyl-alpha-L-arabinopyranoside (pNP-alphaL-Ap) and ginsenoside Rb2. This is Exo-alpha-(1-&gt;6)-L-arabinofuranosidase from Bifidobacterium longum.